We begin with the raw amino-acid sequence, 104 residues long: Hydrogen cyanide synthase subunit HcnA (104 aa).

Residues 16–97 (ADMTIHLNGQ…GMRVETESNR (82 aa)) enclose the 2Fe-2S ferredoxin-type domain. 4 residues coordinate [2Fe-2S] cluster: Cys-60, Cys-65, Cys-68, and Cys-81.

As to quaternary structure, heterotrimer of HcnA, HcnB and HcnC.

The protein resides in the cell membrane. The enzyme catalyses glycine + 2 A = hydrogen cyanide + 2 AH2 + CO2. Its activity is regulated as follows. Oxygen is necessary for cyanogenesis. Activated by succinate, glycine methyl ester, glucose and D,L-methionine in addition to glycine. Phenazine methosulfate, methylene blue, 2,6-dichlorophenolindophenol (DCIP) and ferricyanide can replace oxygen for the reaction. Inhibited by pyrrolnitrin and acriflavine at 1 mM concentration. Functionally, a three-component membrane-bound flavoenzyme that catalyzes the formation of hydrogen cyanide, a secondary metabolite, by transfer of electrons to a cyanide-resistant branch of the aerobic respiratory chain. This Pseudomonas aeruginosa (strain ATCC 15692 / DSM 22644 / CIP 104116 / JCM 14847 / LMG 12228 / 1C / PRS 101 / PAO1) protein is Hydrogen cyanide synthase subunit HcnA.